A 180-amino-acid polypeptide reads, in one-letter code: Crossover junction endodeoxyribonuclease RuvC (180 aa).

Active-site residues include Asp7, Glu66, and Asp138. Asp7, Glu66, and Asp138 together coordinate Mg(2+).

This sequence belongs to the RuvC family. In terms of assembly, homodimer which binds Holliday junction (HJ) DNA. The HJ becomes 2-fold symmetrical on binding to RuvC with unstacked arms; it has a different conformation from HJ DNA in complex with RuvA. In the full resolvosome a probable DNA-RuvA(4)-RuvB(12)-RuvC(2) complex forms which resolves the HJ. Requires Mg(2+) as cofactor.

It is found in the cytoplasm. The catalysed reaction is Endonucleolytic cleavage at a junction such as a reciprocal single-stranded crossover between two homologous DNA duplexes (Holliday junction).. Functionally, the RuvA-RuvB-RuvC complex processes Holliday junction (HJ) DNA during genetic recombination and DNA repair. Endonuclease that resolves HJ intermediates. Cleaves cruciform DNA by making single-stranded nicks across the HJ at symmetrical positions within the homologous arms, yielding a 5'-phosphate and a 3'-hydroxyl group; requires a central core of homology in the junction. The consensus cleavage sequence is 5'-(A/T)TT(C/G)-3'. Cleavage occurs on the 3'-side of the TT dinucleotide at the point of strand exchange. HJ branch migration catalyzed by RuvA-RuvB allows RuvC to scan DNA until it finds its consensus sequence, where it cleaves and resolves the cruciform DNA. This Burkholderia vietnamiensis (strain G4 / LMG 22486) (Burkholderia cepacia (strain R1808)) protein is Crossover junction endodeoxyribonuclease RuvC.